Reading from the N-terminus, the 756-residue chain is Subtilisin-like protease SBT3.9 (756 aa).

The N-terminal stretch at 1 to 25 (MSKTILFLALFLSIVLNVQISFVVA) is a signal peptide. A propeptide spans 26–108 (ESKVYVVYLG…VIPNTLYEMT (83 aa)) (activation peptide). One can recognise an Inhibitor I9 domain in the interval 29–106 (VYVVYLGEKE…VQVIPNTLYE (78 aa)). A Peptidase S8 domain is found at 112–603 (TWDYLGVSPG…GGLINPEKAV (492 aa)). Asp142 functions as the Charge relay system in the catalytic mechanism. N-linked (GlcNAc...) asparagine glycans are attached at residues Asn175 and Asn202. Catalysis depends on His218, which acts as the Charge relay system. Asn233, Asn357, Asn395, and Asn519 each carry an N-linked (GlcNAc...) asparagine glycan. In terms of domain architecture, PA spans 386 to 460 (DCEKLSANPN…ELGTDILFYI (75 aa)). Ser534 functions as the Charge relay system in the catalytic mechanism.

This sequence belongs to the peptidase S8 family.

Its subcellular location is the secreted. The chain is Subtilisin-like protease SBT3.9 from Arabidopsis thaliana (Mouse-ear cress).